We begin with the raw amino-acid sequence, 157 residues long: Transcription elongation factor GreA (157 aa).

The tract at residues 1 to 24 (MDKFPMTPEGYHALDEELKRRQQE) is disordered. Basic and acidic residues predominate over residues 12 to 24 (HALDEELKRRQQE). Positions 53 to 73 (EAQSLNEGRIAELEDKLSRAE) form a coiled coil.

It belongs to the GreA/GreB family.

In terms of biological role, necessary for efficient RNA polymerase transcription elongation past template-encoded arresting sites. The arresting sites in DNA have the property of trapping a certain fraction of elongating RNA polymerases that pass through, resulting in locked ternary complexes. Cleavage of the nascent transcript by cleavage factors such as GreA or GreB allows the resumption of elongation from the new 3'terminus. GreA releases sequences of 2 to 3 nucleotides. The sequence is that of Transcription elongation factor GreA from Beijerinckia indica subsp. indica (strain ATCC 9039 / DSM 1715 / NCIMB 8712).